Here is a 421-residue protein sequence, read N- to C-terminus: UDP-N-acetylglucosamine 1-carboxyvinyltransferase (421 aa).

Position 22 to 23 (22 to 23 (KN)) interacts with phosphoenolpyruvate. R92 is a UDP-N-acetyl-alpha-D-glucosamine binding site. The active-site Proton donor is the C116. C116 carries the 2-(S-cysteinyl)pyruvic acid O-phosphothioketal modification. 2 residues coordinate UDP-N-acetyl-alpha-D-glucosamine: D306 and V328.

This sequence belongs to the EPSP synthase family. MurA subfamily.

Its subcellular location is the cytoplasm. It carries out the reaction phosphoenolpyruvate + UDP-N-acetyl-alpha-D-glucosamine = UDP-N-acetyl-3-O-(1-carboxyvinyl)-alpha-D-glucosamine + phosphate. Its pathway is cell wall biogenesis; peptidoglycan biosynthesis. Cell wall formation. Adds enolpyruvyl to UDP-N-acetylglucosamine. The sequence is that of UDP-N-acetylglucosamine 1-carboxyvinyltransferase from Thermotoga petrophila (strain ATCC BAA-488 / DSM 13995 / JCM 10881 / RKU-1).